A 270-amino-acid polypeptide reads, in one-letter code: Tryptophan synthase alpha chain (270 aa).

Active-site proton acceptor residues include Glu-60 and Asp-71.

Belongs to the TrpA family. In terms of assembly, tetramer of two alpha and two beta chains.

The catalysed reaction is (1S,2R)-1-C-(indol-3-yl)glycerol 3-phosphate + L-serine = D-glyceraldehyde 3-phosphate + L-tryptophan + H2O. The protein operates within amino-acid biosynthesis; L-tryptophan biosynthesis; L-tryptophan from chorismate: step 5/5. The alpha subunit is responsible for the aldol cleavage of indoleglycerol phosphate to indole and glyceraldehyde 3-phosphate. The polypeptide is Tryptophan synthase alpha chain (Deinococcus radiodurans (strain ATCC 13939 / DSM 20539 / JCM 16871 / CCUG 27074 / LMG 4051 / NBRC 15346 / NCIMB 9279 / VKM B-1422 / R1)).